The sequence spans 120 residues: Large ribosomal subunit protein uL18 (120 aa).

The tract at residues 1 to 24 (MITKAAKNATRKKRHARVRAKLTG) is disordered. Positions 9 to 20 (ATRKKRHARVRA) are enriched in basic residues.

This sequence belongs to the universal ribosomal protein uL18 family. In terms of assembly, part of the 50S ribosomal subunit; part of the 5S rRNA/L5/L18/L25 subcomplex. Contacts the 5S and 23S rRNAs.

Its function is as follows. This is one of the proteins that bind and probably mediate the attachment of the 5S RNA into the large ribosomal subunit, where it forms part of the central protuberance. In Bacillus mycoides (strain KBAB4) (Bacillus weihenstephanensis), this protein is Large ribosomal subunit protein uL18.